The following is a 227-amino-acid chain: 7-cyano-7-deazaguanine synthase (227 aa).

7–17 contributes to the ATP binding site; sequence LSGGMDSLVTT. 4 residues coordinate Zn(2+): Cys187, Cys195, Cys198, and Cys201.

The protein belongs to the QueC family. It depends on Zn(2+) as a cofactor.

The catalysed reaction is 7-carboxy-7-deazaguanine + NH4(+) + ATP = 7-cyano-7-deazaguanine + ADP + phosphate + H2O + H(+). Its pathway is purine metabolism; 7-cyano-7-deazaguanine biosynthesis. Its function is as follows. Catalyzes the ATP-dependent conversion of 7-carboxy-7-deazaguanine (CDG) to 7-cyano-7-deazaguanine (preQ(0)). In Chlorobium luteolum (strain DSM 273 / BCRC 81028 / 2530) (Pelodictyon luteolum), this protein is 7-cyano-7-deazaguanine synthase.